The following is a 244-amino-acid chain: Aliphatic sulfonates import ATP-binding protein SsuB 2 (244 aa).

The ABC transporter domain maps to 13-229 (VQVRSLVRGF…ALGDSKFHEF (217 aa)). 45 to 52 (GKSGSGKS) is an ATP binding site.

The protein belongs to the ABC transporter superfamily. Aliphatic sulfonates importer (TC 3.A.1.17.2) family. As to quaternary structure, the complex is composed of two ATP-binding proteins (SsuB), two transmembrane proteins (SsuC) and a solute-binding protein (SsuA).

It localises to the cell membrane. It catalyses the reaction ATP + H2O + aliphatic sulfonate-[sulfonate-binding protein]Side 1 = ADP + phosphate + aliphatic sulfonateSide 2 + [sulfonate-binding protein]Side 1.. Part of the ABC transporter complex SsuABC involved in aliphatic sulfonates import. Responsible for energy coupling to the transport system. The sequence is that of Aliphatic sulfonates import ATP-binding protein SsuB 2 from Rhodococcus jostii (strain RHA1).